A 280-amino-acid chain; its full sequence is UDP-3-O-acyl-N-acetylglucosamine deacetylase (280 aa).

Residues His77, His238, and Asp242 each coordinate Zn(2+). Residue His265 is the Proton donor of the active site.

It belongs to the LpxC family. Zn(2+) is required as a cofactor.

It catalyses the reaction a UDP-3-O-[(3R)-3-hydroxyacyl]-N-acetyl-alpha-D-glucosamine + H2O = a UDP-3-O-[(3R)-3-hydroxyacyl]-alpha-D-glucosamine + acetate. The protein operates within glycolipid biosynthesis; lipid IV(A) biosynthesis; lipid IV(A) from (3R)-3-hydroxytetradecanoyl-[acyl-carrier-protein] and UDP-N-acetyl-alpha-D-glucosamine: step 2/6. Its function is as follows. Catalyzes the hydrolysis of UDP-3-O-myristoyl-N-acetylglucosamine to form UDP-3-O-myristoylglucosamine and acetate, the committed step in lipid A biosynthesis. This chain is UDP-3-O-acyl-N-acetylglucosamine deacetylase, found in Nostoc sp. (strain PCC 7120 / SAG 25.82 / UTEX 2576).